We begin with the raw amino-acid sequence, 379 residues long: Cytochrome b (379 aa).

4 helical membrane-spanning segments follow: residues 33-53 (FGSL…FLAM), 77-98 (WLIR…YLHI), 113-133 (WNIG…GYVL), and 178-198 (FFAF…LHLL). Histidine 83 and histidine 97 together coordinate heme b. The heme b site is built by histidine 182 and histidine 196. Histidine 201 is an a ubiquinone binding site. Transmembrane regions (helical) follow at residues 226-246 (YKDL…ALFY), 288-308 (LGGV…PILH), 320-340 (ISQL…WIGG), and 347-367 (YIII…VLNP).

This sequence belongs to the cytochrome b family. As to quaternary structure, the cytochrome bc1 complex contains 3 respiratory subunits (MT-CYB, CYC1 and UQCRFS1), 2 core proteins (UQCRC1 and UQCRC2) and probably 6 low-molecular weight proteins. The cofactor is heme b.

Its subcellular location is the mitochondrion inner membrane. Its function is as follows. Component of the ubiquinol-cytochrome c reductase complex (complex III or cytochrome b-c1 complex) that is part of the mitochondrial respiratory chain. The b-c1 complex mediates electron transfer from ubiquinol to cytochrome c. Contributes to the generation of a proton gradient across the mitochondrial membrane that is then used for ATP synthesis. The sequence is that of Cytochrome b (mt-cyb) from Anguilla mossambica (African longfin eel).